A 541-amino-acid polypeptide reads, in one-letter code: Interleukin-18 receptor 1 (541 aa).

A signal peptide spans 1 to 18; the sequence is MNCRELPLTLWVLISVST. Intrachain disulfides connect C22-C41 and C43-C81. Topologically, residues 22–329 are extracellular; the sequence is CTSRPHITVV…ADIPGHVFTR (308 aa). Ig-like C2-type domains are found at residues 33–121, 133–212, and 220–312; these read GEPF…SCFT, KKFF…DRSN, and PKLN…KSFI. N91, N102, N150, N197, N203, N236, N255, and N297 each carry an N-linked (GlcNAc...) asparagine glycan. 2 disulfides stabilise this stretch: C119/C158 and C140/C185. C237 and C298 are disulfide-bonded. The helical transmembrane segment at 330–350 threads the bilayer; the sequence is GMIIAVLILVAVVCLVTVCVI. The Cytoplasmic portion of the chain corresponds to 351-541; it reads YRVDLVLFYR…PEVLPVLSES (191 aa). Residues 373 to 520 form the TIR domain; that stretch reads KTYDAFVSYL…RFWKNLLYLM (148 aa). E455 is a catalytic residue.

This sequence belongs to the interleukin-1 receptor family. Forms a ternary complex with IL18 and IL18RAP. Within this complex, IL18R1 is involved in ligand-binding and IL18RAP in signaling leading to NF-kappa-B and JNK activation. Interacts with SLC12A3 in peritoneal macrophages; this interaction is increased by IL18 treatment. N-glycosylated. N-linked glycosyl chains contribute to ligand recognition and intra-receptor interactions required for formation of an active ternary receptor complex. As to expression, highly expressed in leukocytes, spleen, lung. Also expressed, but at lower levels, in liver, small intestine, colon, prostate, thymus, placenta, and heart. Specifically coexpressed with IL18R1 in Th1 cells.

The protein resides in the membrane. It catalyses the reaction NAD(+) + H2O = ADP-D-ribose + nicotinamide + H(+). Its function is as follows. Within the IL18 receptor complex, responsible for the binding of the pro-inflammatory cytokine IL18, but not IL1A nor IL1B. Involved in IL18-mediated IFNG synthesis from T-helper 1 (Th1) cells. Contributes to IL18-induced cytokine production, either independently of SLC12A3, or as a complex with SLC12A3. This is Interleukin-18 receptor 1 from Homo sapiens (Human).